The chain runs to 308 residues: Cytochrome c biogenesis protein CcsA (308 aa).

7 helical membrane-spanning segments follow: residues 2-22 (IVST…SILI), 44-64 (GMLV…IYLG), 71-91 (LSES…IAYF), 143-163 (MILG…LMVI), 212-232 (VIGL…VWAN), 239-259 (WSWD…AIYL), and 273-293 (AIVA…VNLV).

The protein belongs to the CcmF/CycK/Ccl1/NrfE/CcsA family. May interact with Ccs1.

The protein resides in the plastid membrane. Required during biogenesis of c-type cytochromes (cytochrome c6 and cytochrome f) at the step of heme attachment. This chain is Cytochrome c biogenesis protein CcsA, found in Cuscuta exaltata (Tall dodder).